Reading from the N-terminus, the 320-residue chain is Arabinan endo-1,5-alpha-L-arabinosidase C (320 aa).

Positions 1-15 (MKLALSLFLLSGSLA) are cleaved as a signal peptide. Residue aspartate 31 is the Proton acceptor of the active site. 2 N-linked (GlcNAc...) asparagine glycosylation sites follow: asparagine 126 and asparagine 190. The active-site Proton donor is the glutamate 198.

It belongs to the glycosyl hydrolase 43 family.

The protein resides in the secreted. The catalysed reaction is Endohydrolysis of (1-&gt;5)-alpha-arabinofuranosidic linkages in (1-&gt;5)-arabinans.. It participates in glycan metabolism; L-arabinan degradation. Endo-1,5-alpha-L-arabinanase involved in degradation of pectin. Its preferred substrate is linear 1,5-alpha-L-arabinan. The polypeptide is Arabinan endo-1,5-alpha-L-arabinosidase C (abnC) (Emericella nidulans (strain FGSC A4 / ATCC 38163 / CBS 112.46 / NRRL 194 / M139) (Aspergillus nidulans)).